The primary structure comprises 110 residues: Plasma membrane ATPase (110 aa).

The Mg(2+) site is built by D72 and D76. The disordered stretch occupies residues 88–110 (APESTSLNLPNDKELSEIAEQAK). The span at 98–110 (NDKELSEIAEQAK) shows a compositional bias: basic and acidic residues.

Belongs to the cation transport ATPase (P-type) (TC 3.A.3) family. Type IIIA subfamily. The N-terminus is blocked.

Its subcellular location is the cell membrane. It catalyses the reaction ATP + H2O + H(+)(in) = ADP + phosphate + 2 H(+)(out). Functionally, the plasma membrane ATPase of plants and fungi is a hydrogen ion pump. The proton gradient it generates drives the active transport of nutrients by H(+)-symport. The resulting external acidification and/or internal alkinization may mediate growth responses. The chain is Plasma membrane ATPase from Avena sativa (Oat).